The chain runs to 81 residues: Cytotoxin 2 (81 aa).

Positions 1-21 are cleaved as a signal peptide; that stretch reads MKTLLLTLVVVTIVCLDLGYT. Disulfide bonds link C24/C42, C35/C59, C63/C74, and C75/C80.

It belongs to the three-finger toxin family. Short-chain subfamily. Type IA cytotoxin sub-subfamily. In terms of assembly, monomer in solution; Homodimer and oligomer in the presence of negatively charged lipids forming a pore with a size ranging between 20 and 30 Angstroms. Expressed by the venom gland.

It localises to the secreted. It is found in the target cell membrane. In terms of biological role, shows cytolytic activity on many different cells by forming pore in lipid membranes. In vivo, increases heart rate or kills the animal by cardiac arrest. In addition, it binds to heparin with high affinity, interacts with Kv channel-interacting protein 1 (KCNIP1) in a calcium-independent manner, and binds to integrin alpha-V/beta-3 (ITGAV/ITGB3) with moderate affinity. The chain is Cytotoxin 2 from Naja kaouthia (Monocled cobra).